A 452-amino-acid polypeptide reads, in one-letter code: Probable ECA polymerase (452 aa).

Helical transmembrane passes span 6-26 (FSGL…LTWF), 37-57 (VFFS…TSVL), 63-83 (VGVA…CFYG), 118-138 (VILM…NGFL), 155-175 (GVAL…VYFL), 181-201 (AWLF…MIVG), 207-227 (IIIA…ISLW), 228-248 (MLAA…LKRY), 341-361 (LVVM…GLII), 378-398 (YKAA…IVLA), and 410-430 (VFFL…FWLF).

Belongs to the WzyE family. Probably part of a complex composed of WzxE, WzyE and WzzE.

It is found in the cell inner membrane. Its pathway is bacterial outer membrane biogenesis; enterobacterial common antigen biosynthesis. In terms of biological role, probably involved in the polymerization of enterobacterial common antigen (ECA) trisaccharide repeat units. This Salmonella typhi protein is Probable ECA polymerase.